Here is a 139-residue protein sequence, read N- to C-terminus: Mitochondrial intermembrane space import and assembly protein 40 (139 aa).

Disulfide bonds link Cys-53/Cys-55, Cys-64/Cys-97, and Cys-74/Cys-87. Residues 61-105 (SGPCGEQFKSAFSCFHYSTEDIKGSDCIDQFRAMQECMQKYPDLY) form the CHCH domain. Short sequence motifs (cx9C motif) lie at residues 64 to 74 (CGEQFKSAFSC) and 87 to 97 (CIDQFRAMQEC). A disordered region spans residues 102-139 (PDLYPQDEEEEEEAKPVEPVEETADTKVSAAKEQGTSS). Over residues 106 to 124 (PQDEEEEEEAKPVEPVEET) the composition is skewed to acidic residues.

As to quaternary structure, monomer. Can form homooligomers. Interacts with GFER and forms transient disulfide bonds with GFER. Interacts with MICU1. Interacts with COX19 forming transient intermolecular disulfide bridges. Interacts with COA7 through transient intermolecular disulfide bonds. Interacts with AIFM1; the interaction increases in presence of NADH. Interacts with NDUFB10. Forms intrachain disulfide bridges, but exists in different redox states. As to expression, widely expressed. Present at high level in liver and kidney, followed by lung, brain, heart and spleen (at protein level).

The protein resides in the mitochondrion intermembrane space. In terms of biological role, central component of a redox-sensitive mitochondrial intermembrane space import machinery which is required for the biogenesis of respiratory chain complexes. Functions as chaperone and catalyzes the formation of disulfide bonds in substrate proteins, such as COX17, COX19, MICU1 and COA7. Required for the import and folding of small cysteine-containing proteins (small Tim) in the mitochondrial intermembrane space (IMS). Required for the import of COA7 in the IMS. Precursor proteins to be imported into the IMS are translocated in their reduced form into the mitochondria. The oxidized form of CHCHD4/MIA40 forms a transient intermolecular disulfide bridge with the reduced precursor protein, resulting in oxidation of the precursor protein that now contains an intramolecular disulfide bond and is able to undergo folding in the IMS. Reduced CHCHD4/MIA40 is then reoxidized by GFER/ERV1 via a disulfide relay system. Mediates formation of disulfide bond in MICU1 in the IMS, promoting formation of the MICU1-MICU2 heterodimer that regulates mitochondrial calcium uptake. This chain is Mitochondrial intermembrane space import and assembly protein 40 (Chchd4), found in Mus musculus (Mouse).